The sequence spans 267 residues: Indole-3-glycerol phosphate synthase (267 aa).

Belongs to the TrpC family.

It catalyses the reaction 1-(2-carboxyphenylamino)-1-deoxy-D-ribulose 5-phosphate + H(+) = (1S,2R)-1-C-(indol-3-yl)glycerol 3-phosphate + CO2 + H2O. The protein operates within amino-acid biosynthesis; L-tryptophan biosynthesis; L-tryptophan from chorismate: step 4/5. The chain is Indole-3-glycerol phosphate synthase from Cupriavidus taiwanensis (strain DSM 17343 / BCRC 17206 / CCUG 44338 / CIP 107171 / LMG 19424 / R1) (Ralstonia taiwanensis (strain LMG 19424)).